The chain runs to 171 residues: Secretion monitor (171 aa).

The N-terminal stretch at 1–36 (MIGILNRWRQFGRRYFWPHLLLGMVAASLGLPTSLN) is a signal peptide.

It belongs to the SecM family.

It localises to the cytoplasm. It is found in the cytosol. The protein resides in the periplasm. In terms of biological role, regulates secA expression by translational coupling of the secM secA operon. Translational pausing at a specific Pro residue 5 residues before the end of the protein may allow disruption of a mRNA repressor helix that normally suppresses secA translation initiation. The sequence is that of Secretion monitor from Pectobacterium carotovorum subsp. carotovorum (strain PC1).